The sequence spans 515 residues: 3,4-dehydroadipyl-CoA semialdehyde dehydrogenase (515 aa).

Active-site residues include Glu-255 and Cys-294. Residues 470-515 form a disordered region; that stretch reads VMPTCLHGGPRARRRRRGVGRSARAGDVSPPLRRAGRPRGAGSPVA. Over residues 479-488 the composition is skewed to basic residues; the sequence is PRARRRRRGV. Over residues 489-515 the composition is skewed to low complexity; sequence GRSARAGDVSPPLRRAGRPRGAGSPVA.

Belongs to the aldehyde dehydrogenase family. In terms of assembly, homodimer.

The enzyme catalyses (3Z)-6-oxohex-3-enoyl-CoA + NADP(+) + H2O = cis-3,4-dehydroadipyl-CoA + NADPH + 2 H(+). In terms of biological role, catalyzes the NADP-dependent oxidation of 3,4-dehydroadipyl-CoA semialdehyde to form cis-3,4-dehydroadipyl-CoA. In Aromatoleum evansii (Azoarcus evansii), this protein is 3,4-dehydroadipyl-CoA semialdehyde dehydrogenase (boxD).